The chain runs to 109 residues: MFGKGGMGNLMKQAQMMQEKMAKVQEEIARMEMVGESGAGLVKVTMTGAHTVRKVEIDPSLMEDDKEMLEDLIAAACNDAARRIEENQKTKMAEVTGGMQLPPGMKMPF.

The protein belongs to the YbaB/EbfC family. In terms of assembly, homodimer.

Its subcellular location is the cytoplasm. The protein resides in the nucleoid. Binds to DNA and alters its conformation. May be involved in regulation of gene expression, nucleoid organization and DNA protection. This chain is Nucleoid-associated protein Sbal223_1770, found in Shewanella baltica (strain OS223).